A 413-amino-acid chain; its full sequence is Probable tRNA pseudouridine synthase D (413 aa).

Asp97 functions as the Nucleophile in the catalytic mechanism. Residues 167–370 (AVPNYYGYQR…YGSYRRARLE (204 aa)) enclose the TRUD domain.

It belongs to the pseudouridine synthase TruD family.

The catalysed reaction is uridine(13) in tRNA = pseudouridine(13) in tRNA. Could be responsible for synthesis of pseudouridine from uracil-13 in transfer RNAs. This is Probable tRNA pseudouridine synthase D from Pyrobaculum arsenaticum (strain DSM 13514 / JCM 11321 / PZ6).